We begin with the raw amino-acid sequence, 93 residues long: SH3 domain-binding glutamic acid-rich-like protein 3 (93 aa).

Position 2 is an N-acetylserine (S2). The region spanning 2 to 93 (SGLRVYSTSV…DTLQEFLKLA (92 aa)) is the Glutaredoxin domain. T9 carries O-linked (GalNAc...) threonine glycosylation.

The protein belongs to the SH3BGR family. In terms of assembly, homodimer. Interacts with MYO1C (via its IQ motifs); the interaction is dependent on calcium and takes place at membrane ruffles. In terms of processing, may be glycosylated.

It is found in the cytoplasm. The protein resides in the cytosol. It localises to the cell projection. Its subcellular location is the ruffle membrane. The protein localises to the nucleus. Could act as a modulator of glutaredoxin biological activity. May play a role in cytoskeleton organization. The protein is SH3 domain-binding glutamic acid-rich-like protein 3 (Sh3bgrl3) of Mus musculus (Mouse).